The sequence spans 206 residues: Small ribosomal subunit protein uS4 (206 aa).

An S4 RNA-binding domain is found at 96–156; that stretch reads NRLDNVTYRI…KNSKLQSRIK (61 aa).

The protein belongs to the universal ribosomal protein uS4 family. In terms of assembly, part of the 30S ribosomal subunit. Contacts protein S5. The interaction surface between S4 and S5 is involved in control of translational fidelity.

One of the primary rRNA binding proteins, it binds directly to 16S rRNA where it nucleates assembly of the body of the 30S subunit. Its function is as follows. With S5 and S12 plays an important role in translational accuracy. The protein is Small ribosomal subunit protein uS4 of Buchnera aphidicola subsp. Baizongia pistaciae (strain Bp).